Here is a 175-residue protein sequence, read N- to C-terminus: Methylated-DNA--protein-cysteine methyltransferase (175 aa).

Residues Tyr-115 and Arg-127 each contribute to the DNA site. Cys-144 (nucleophile; methyl group acceptor) is an active-site residue.

It belongs to the MGMT family.

It localises to the nucleus. It carries out the reaction a 6-O-methyl-2'-deoxyguanosine in DNA + L-cysteinyl-[protein] = S-methyl-L-cysteinyl-[protein] + a 2'-deoxyguanosine in DNA. The enzyme catalyses a 4-O-methyl-thymidine in DNA + L-cysteinyl-[protein] = a thymidine in DNA + S-methyl-L-cysteinyl-[protein]. In terms of biological role, involved in the cellular defense against the biological effects of O6-methylguanine (O6-MeG) and O4-methylthymine (O4-MeT) in DNA. Repairs the methylated nucleobase in DNA by stoichiometrically transferring the methyl group to a cysteine residue in the enzyme. This is a suicide reaction: the enzyme is irreversibly inactivated. The sequence is that of Methylated-DNA--protein-cysteine methyltransferase (MGT1) from Candida albicans (strain SC5314 / ATCC MYA-2876) (Yeast).